Consider the following 838-residue polypeptide: MSASRSRNKQSKLCDDERLDISKDEFNRFQEAFGQEEFRKLFFDYVDEIQDPENRKIYEAEITQLEKERGVEVRFIHPKPGFVIKTALDGELKCFINIASSEEIERPKNEVATDPSSGSRGLNWSIPMAQTTSRDDFDAKNNHCKVFDVVFHPDALHLAMRNKQFRQCLIDTALDAVEREYKVSLDRANLKFPKLDYKGIPRPTVIRKMSDNPTAEEQEPHPLAHMFPTKPPAPGKPEPRVLPMKTKPTPVPEFTVPRYTIKHSHDVDLSEYTDELDAKLHVTVPRSLVVEIELPLLRSTAECQLDVTSKSVYLFSERQGAKYRLKLDLPFIVDDKAGRARFDTDMRRLSITLPVVRKSVQEQAQMHETLRHFSREDSGVELHSNSESPVEEDPDGELSDSKADISKTSSPTVVRNANSPFLKSSVHYQLPSKFDCNVLDNVMAFVLHVPNVQPDSIEQLREQRSLHLKFATIGSGYYPTHYAFYVELSADHEDSAIESAEAEAWDNNVVLKLYLNSQSETPAGYLAGLDATELKEYPVHGQYHVKSKEKVNAKKENAPLDVEFERNQEGHALKVTIRPGTKEEEEEEEDKENQDQKPESDQQQQQQVQNKKSGKKQRKRNKKERSLSESACADMVLQEPLAKSNELQPRATFKLPPQRKQRSYSESNDSTGRSHRGILKRFSRYGPRPSMSDSCSSIDDSSSYSCSVDASGASLFSQSFGGIPEEDRSDAGLSESCKKTVRFNDHIMKQVFRLDSSILGQRKKNQKRRDLKLRAQQRRLSEGDSVDYEETRGSALKQKENPSRNCTDSGLDLTGAAGAHSNNNESDAKNAMMFEMDD.

5 disordered regions span residues 106-125, 212-238, 370-411, 557-696, and 776-838; these read RPKNEVATDPSSGSRGLNWS, NPTAEEQEPHPLAHMFPTKPPAPGKPE, LRHF…TSSP, NAPL…DSCS, and QQRR…EMDD. Positions 114 to 125 are enriched in polar residues; the sequence is DPSSGSRGLNWS. The span at 370–380 shows a compositional bias: basic and acidic residues; sequence LRHFSREDSGV. S378 is modified (phosphoserine). Positions 389-398 are enriched in acidic residues; it reads PVEEDPDGEL. Basic and acidic residues predominate over residues 557 to 572; that stretch reads NAPLDVEFERNQEGHA. The segment covering 583-592 has biased composition (acidic residues); it reads EEEEEEEDKE. The segment covering 601 to 611 has biased composition (low complexity); the sequence is DQQQQQQVQNK. Basic residues-rich tracts occupy residues 612–623 and 673–683; these read KSGKKQRKRNKK and RSHRGILKRFS. Position 781 is a phosphoserine (S781). Residues 789–802 show a composition bias toward basic and acidic residues; the sequence is EETRGSALKQKENP.

The protein belongs to the PIH1 family. Kintoun subfamily. Interacts with Pp1alpha-96A, Pp1-87B, Pp1-13C and flw.

The protein localises to the cytoplasm. In terms of biological role, required for cytoplasmic pre-assembly of axonemal dyneins, thereby playing a central role in motility in cilia and flagella. Involved in pre-assembly of dynein arm complexes in the cytoplasm before intraflagellar transport loads them for the ciliary compartment. This is Protein kintoun from Drosophila sechellia (Fruit fly).